We begin with the raw amino-acid sequence, 632 residues long: FAD-binding monooxygenase ausB (632 aa).

Residues methionine 1–histidine 50 are disordered. Polar residues-rich tracts occupy residues proline 15 to serine 24 and alanine 31 to leucine 43. FAD contacts are provided by residues threonine 116 to tryptophan 119, aspartate 128 to isoleucine 129, and tyrosine 134. Methionine 126–aspartate 128 serves as a coordination point for NADP(+). NADP(+)-binding positions include threonine 269 to glutamine 275 and arginine 292 to threonine 293.

The protein belongs to the FAD-binding monooxygenase family. FAD is required as a cofactor.

The enzyme catalyses protoaustinoid A + AH2 + O2 = berkeleyone A + A + H2O. The protein operates within secondary metabolite biosynthesis; terpenoid biosynthesis. Its function is as follows. FAD-binding monooxygenase; part of the gene cluster that mediates the biosynthesis of calidodehydroaustin, a fungal meroterpenoid. The first step of the pathway is the synthesis of 3,5-dimethylorsellinic acid by the polyketide synthase ausA. 3,5-dimethylorsellinic acid is then prenylated by the polyprenyl transferase ausN. Further epoxidation by the FAD-dependent monooxygenase ausM and cyclization by the probable terpene cyclase ausL lead to the formation of protoaustinoid A. Protoaustinoid A is then oxidized to spiro-lactone preaustinoid A3 by the combined action of the FAD-binding monooxygenases ausB and ausC, and the dioxygenase ausE. Acid-catalyzed keto-rearrangement and ring contraction of the tetraketide portion of preaustinoid A3 by ausJ lead to the formation of preaustinoid A4. The aldo-keto reductase ausK, with the help of ausH, is involved in the next step by transforming preaustinoid A4 into isoaustinone which is in turn hydroxylated by the P450 monooxygenase ausI to form austinolide. The cytochrome P450 monooxygenase ausG modifies austinolide to austinol. Austinol is further acetylated to austin by the O-acetyltransferase ausP, which spontaneously changes to dehydroaustin. The cytochrome P450 monooxygenase ausR then converts dehydroaustin is into 7-dehydrodehydroaustin. The hydroxylation catalyzed by ausR permits the O-acetyltransferase ausQ to add an additional acetyl group to the molecule, leading to the formation of acetoxydehydroaustin. The short chain dehydrogenase ausT catalyzes the reduction of the double bond present between carbon atoms 1 and 2 to convert 7-dehydrodehydroaustin into 1,2-dihydro-7-hydroxydehydroaustin. AusQ catalyzes not only an acetylation reaction but also the addition of the PKS ausV diketide product to 1,2-dihydro-7-hydroxydehydroaustin, forming precalidodehydroaustin. Finally, the iron/alpha-ketoglutarate-dependent dioxygenase converts precalidodehydroaustin into calidodehydroaustin. This Aspergillus calidoustus protein is FAD-binding monooxygenase ausB.